Consider the following 368-residue polypeptide: Glycoprotein UL18 (368 aa).

The signal sequence occupies residues Met1–Val18. Residues Gly19–Ser114 form an alpha-1-like region. Asn56, Asn66, Asn74, Asn95, Asn123, Asn127, Asn150, Asn167, Asn177, Asn193, Asn240, Asn282, and Asn291 each carry an N-linked (GlcNAc...) asparagine; by host glycan. Residues Val115–Val208 are alpha-2-like. Residues Thr209–Pro303 are alpha-3-like. A helical membrane pass occupies residues Tyr321–Phe342.

As to quaternary structure, interacts with host LILRB1.

It localises to the host membrane. In terms of biological role, plays a role in the protection against host NK cell cytotoxicity by interacting with and modulating the activity of the host inhibitory leukocyte Ig-like receptor 1/LILRB1, which is expressed on monocytes, dendritic cells, as well as subsets of T and NK cells. UL18 exerts an inhibitory effect on LIR-1+ NK cells, while it stimulates LIR-1- NK cell. These modulations prevent lysis of the infected cells by NK cells. This is Glycoprotein UL18 (H301) from Homo sapiens (Human).